The primary structure comprises 431 residues: 23S rRNA (uracil(1939)-C(5))-methyltransferase RlmD (431 aa).

A TRAM domain is found at 10-68 (RVTTRQIITVKVNDLDSFGQGVARHNGKALFIPGLLPEESAEVIITEDKKQFARARVSR). [4Fe-4S] cluster-binding residues include Cys-81, Cys-87, Cys-90, and Cys-161. Positions 264, 293, 298, 314, 341, and 362 each coordinate S-adenosyl-L-methionine. Cys-388 serves as the catalytic Nucleophile.

This sequence belongs to the class I-like SAM-binding methyltransferase superfamily. RNA M5U methyltransferase family. RlmD subfamily.

The enzyme catalyses uridine(1939) in 23S rRNA + S-adenosyl-L-methionine = 5-methyluridine(1939) in 23S rRNA + S-adenosyl-L-homocysteine + H(+). Functionally, catalyzes the formation of 5-methyl-uridine at position 1939 (m5U1939) in 23S rRNA. In Salmonella paratyphi A (strain ATCC 9150 / SARB42), this protein is 23S rRNA (uracil(1939)-C(5))-methyltransferase RlmD.